Consider the following 396-residue polypeptide: Putative nickel insertion protein (396 aa).

The protein belongs to the LarC family.

This chain is Putative nickel insertion protein, found in Methanosarcina acetivorans (strain ATCC 35395 / DSM 2834 / JCM 12185 / C2A).